The chain runs to 344 residues: uncharacterized protein (344 aa).

The protein belongs to the glycosyltransferase 2 family.

This is an uncharacterized protein from Escherichia coli (strain K12).